Consider the following 291-residue polypeptide: Potassium-transporting ATPase subunit beta (291 aa).

Topologically, residues 1-36 (MAALQEKKTCGQRMEEFQRYCWNPDTGQMLGRTLSR) are cytoplasmic. A helical; Signal-anchor for type II membrane protein membrane pass occupies residues 37–57 (WVWISLYYVAFYVVMTGLFAL). Residues 58–291 (CLYVLMQTVD…KVEFKLKIEK (234 aa)) lie on the Extracellular side of the membrane. N-linked (GlcNAc...) asparagine glycans are attached at residues asparagine 99, asparagine 103, asparagine 130, asparagine 146, and asparagine 161. A disulfide bond links cysteine 131 and cysteine 152. Residues cysteine 162 and cysteine 178 are joined by a disulfide bond. N-linked (GlcNAc...) asparagine glycans are attached at residues asparagine 193 and asparagine 222. The immunoglobulin-like stretch occupies residues 194–291 (GSAPRVDCAF…KVEFKLKIEK (98 aa)). Cysteine 201 and cysteine 263 form a disulfide bridge.

It belongs to the X(+)/potassium ATPases subunit beta family. As to quaternary structure, the ATPase pump is composed of two subunits: alpha (catalytic) and beta (regulatory). Interacts with alpha subunit ATP12A; this interaction is required for the formation of a functionally active pump and targeting at the plasma membrane. Interacts (via N-terminus) with alpha subunit ATP4A (via the P-domain). In terms of processing, N-glycosylation is necessary for assembly and functional expression of the pump at the plasma membrane.

Its subcellular location is the apical cell membrane. It localises to the cell membrane. The beta subunit of the gastric H(+)/K(+) ATPase pump which transports H(+) ions in exchange for K(+) ions across the apical membrane of parietal cells. Plays a structural and regulatory role in the assembly and membrane targeting of a functionally active pump. Within a transport cycle, the transfer of a H(+) ion across the membrane is coupled to ATP hydrolysis and is associated with a transient phosphorylation of the alpha subunit that shifts the pump conformation from inward-facing (E1) to outward-facing state (E2). Interacts with the phosphorylation domain of the alpha subunit and functions as a ratchet, stabilizing the lumenal-open E2 conformation and preventing the reverse reaction of the transport cycle. The sequence is that of Potassium-transporting ATPase subunit beta from Homo sapiens (Human).